The sequence spans 91 residues: Small ribosomal subunit protein uS19 (91 aa).

This sequence belongs to the universal ribosomal protein uS19 family.

Functionally, protein S19 forms a complex with S13 that binds strongly to the 16S ribosomal RNA. This is Small ribosomal subunit protein uS19 from Saccharophagus degradans (strain 2-40 / ATCC 43961 / DSM 17024).